The following is a 317-amino-acid chain: Brain-specific serine protease 4 (317 aa).

An N-terminal signal peptide occupies residues Met-1–Ala-32. One can recognise a Peptidase S1 domain in the interval Val-50–Gln-290. An N-linked (GlcNAc...) asparagine glycan is attached at Asn-70. Cys-75 and Cys-91 are oxidised to a cystine. Residues His-90 and Asp-141 each act as charge relay system in the active site. 3 disulfide bridges follow: Cys-175/Cys-248, Cys-208/Cys-227, and Cys-238/Cys-266. The active-site Charge relay system is the Ser-242.

It belongs to the peptidase S1 family. In terms of tissue distribution, expressed abundantly in the epithelial cells of the airways, including trachea, esophagus and fetal lung. Scarce in adult lung. Expressed at low levels in placenta, pancreas, prostate and thyroid gland.

The protein localises to the secreted. Its function is as follows. Preferentially cleaves the synthetic substrate H-D-Leu-Thr-Arg-pNA compared to tosyl-Gly-Pro-Arg-pNA. In Homo sapiens (Human), this protein is Brain-specific serine protease 4 (PRSS22).